We begin with the raw amino-acid sequence, 152 residues long: Large ribosomal subunit protein uL11 (152 aa).

This sequence belongs to the universal ribosomal protein uL11 family. As to quaternary structure, part of the ribosomal stalk of the 50S ribosomal subunit. Interacts with L10 and the large rRNA to form the base of the stalk. L10 forms an elongated spine to which L12 dimers bind in a sequential fashion forming a multimeric L10(L12)X complex. Post-translationally, one or more lysine residues are methylated.

In terms of biological role, forms part of the ribosomal stalk which helps the ribosome interact with GTP-bound translation factors. This chain is Large ribosomal subunit protein uL11, found in Mycoplasmoides gallisepticum (strain R(low / passage 15 / clone 2)) (Mycoplasma gallisepticum).